The sequence spans 183 residues: Protein Syd (183 aa).

Belongs to the Syd family.

The protein resides in the cell inner membrane. Functionally, interacts with the SecY protein in vivo. May bind preferentially to an uncomplexed state of SecY, thus functioning either as a chelating agent for excess SecY in the cell or as a regulatory factor that negatively controls the translocase function. This is Protein Syd from Idiomarina loihiensis (strain ATCC BAA-735 / DSM 15497 / L2-TR).